The following is a 330-amino-acid chain: Ferredoxin--NADP reductase (330 aa).

Residues glutamate 35, glutamine 43, tyrosine 48, valine 90, phenylalanine 123, aspartate 285, and threonine 326 each coordinate FAD.

This sequence belongs to the ferredoxin--NADP reductase type 2 family. As to quaternary structure, homodimer. FAD serves as cofactor.

The enzyme catalyses 2 reduced [2Fe-2S]-[ferredoxin] + NADP(+) + H(+) = 2 oxidized [2Fe-2S]-[ferredoxin] + NADPH. The chain is Ferredoxin--NADP reductase from Streptococcus equi subsp. zooepidemicus (strain MGCS10565).